The chain runs to 206 residues: Outer-membrane lipoprotein LolB (206 aa).

An N-terminal signal peptide occupies residues 1–18 (MKTFKFLTALFATAILTA). Cys19 is lipidated: N-palmitoyl cysteine. Residue Cys19 is the site of S-diacylglycerol cysteine attachment.

This sequence belongs to the LolB family. In terms of assembly, monomer.

It is found in the cell outer membrane. Its function is as follows. Plays a critical role in the incorporation of lipoproteins in the outer membrane after they are released by the LolA protein. The protein is Outer-membrane lipoprotein LolB of Haemophilus influenzae (strain PittEE).